The primary structure comprises 550 residues: Efflux pump DEP3 (550 aa).

Positions 1 to 33 (MSEQSTLAGPYTEKPGVESQNPTGDGKASFDET) are disordered. 11 helical membrane-spanning segments follow: residues 44–64 (AIAYAAMLSTTFLFALDNTIV), 78–98 (LELISWIGTGFALGTMFILLW), 109–129 (WVYIFNILLFEVGSAVCGAAP), 139–159 (VIAGIGGSGMYSGTLTYVSVL), 172–192 (STVVWGVGSVVGPVVGGAFAA), 199–219 (WGFYINLPIGAVFAPAYMILF), 242–262 (AVIFLAGSACLTVALTFGGVV), 268–288 (GTIIALWTVTGVLLVAFIVLL), 319–339 (FLASGIILAMTYYVPLYFQFI), 351–371 (LLPLIMFMVAFSMVNGFLMPK), and 373–393 (GLIPIWYIVGSALTLIGSALM). Asn399 carries an N-linked (GlcNAc...) asparagine glycan. 3 helical membrane-spanning segments follow: residues 410-430 (ILVGAGAGCYIVAGFAIVQSL), 439-459 (AVGAMTISQDLGMVLFLAICG), and 515-535 (SIWAFFMAAAALSFVCSWPLF).

This sequence belongs to the major facilitator superfamily. TCR/Tet family.

The protein resides in the cell membrane. In terms of biological role, efflux pump; part of the gene cluster that mediates the biosynthesis of depudecin, a highly oxidized eleven-carbon linear polyketide that acts as a histone deacetylase (HDAC) inhibitor and makes a small contribution to pathogenesis. Is presumed either to be responsible for exporting depudecin, to provide self-protection, or both. The protein is Efflux pump DEP3 of Fusarium langsethiae.